The primary structure comprises 312 residues: Ribosomal RNA small subunit methyltransferase H (312 aa).

S-adenosyl-L-methionine contacts are provided by residues 38-40 (GGH), Asp-58, Phe-84, Asp-104, and Gln-111.

This sequence belongs to the methyltransferase superfamily. RsmH family.

Its subcellular location is the cytoplasm. The enzyme catalyses cytidine(1402) in 16S rRNA + S-adenosyl-L-methionine = N(4)-methylcytidine(1402) in 16S rRNA + S-adenosyl-L-homocysteine + H(+). Specifically methylates the N4 position of cytidine in position 1402 (C1402) of 16S rRNA. This Alcanivorax borkumensis (strain ATCC 700651 / DSM 11573 / NCIMB 13689 / SK2) protein is Ribosomal RNA small subunit methyltransferase H.